Here is a 374-residue protein sequence, read N- to C-terminus: MAQPYPPAQYPPPPQNGIPAEYAPPPPHPTQDYSGQTPVPPEHGMTLYTPAQTHPEQPGTEASTQPIAGTQTVPQADEAAQTDNQQLHPSDPTEKQQPKRLHVSNIPFRFRDPDLRQMFGQFGKILDVEIIFNERGSKGFGFVTFETSSDADRAREKLNGTIVEGRKIEVNNATARVMTNKKPGNPYANGWKLNPVVGTVYGPEFYAVTSFPYPTTGTAVAYRGAHLRGRGRAVYNTFRAAPPPPPIPTYGAALEQTLVKMPVPWAGLAPCPLPPQQTPEPAYPTSPAFPPLSCPFASRVVYQDGFYGAEIYGGYAAYRYAQPAAATAAAYSDSYGRVYAAADPYHHTIGPTATYSIGTMASLCRGGYSRFTPY.

Residues methionine 1–proline 29 are compositionally biased toward pro residues. The disordered stretch occupies residues methionine 1–asparagine 105. A compositionally biased stretch (polar residues) spans threonine 49–proline 74. In terms of domain architecture, RRM spans lysine 99–alanine 175. Arginine 223 bears the Asymmetric dimethylarginine; alternate mark. Position 223 is an omega-N-methylarginine; alternate (arginine 223). At arginine 319 the chain carries Asymmetric dimethylarginine.

In terms of processing, phosphorylated. Widely expressed in brain, including in cerebral cortex, hippocampus, thalamus, caudate/putamen, cerebellum, as well as in the spinal cord (at protein level). Not expressed in all neuronal cells within a region, in cerebellum, expression is absent in Purkinje cells (at protein level). Expressed in the retina in the ganglion cells and some cells in the inner nuclear layer, but absent from the photoreceptor cells and most cells in the inner nuclear layer (at protein level).

The protein resides in the nucleus. It is found in the cytoplasm. Functionally, pre-mRNA alternative splicing regulator. Regulates alternative splicing of RBFOX2 to enhance the production of mRNA species that are targeted for nonsense-mediated decay (NMD). This Mus musculus (Mouse) protein is RNA binding protein fox-1 homolog 3 (Rbfox3).